Reading from the N-terminus, the 311-residue chain is Transcription factor BIM2 (311 aa).

Disordered regions lie at residues 1–60 (MRTG…RRSK) and 271–311 (ANQG…MKTL). 2 stretches are compositionally biased toward basic and acidic residues: residues 33-44 (SNRDSKENDKAS) and 51-60 (SVTEQRRRSK). The region spanning 45-95 (AIRSKHSVTEQRRRSKINERFQILRELIPNSEQKRDTASFLLEVIDYVQYL) is the bHLH domain.

Homodimer. Interacts with the N-terminus of BZR2/BES1. Expressed constitutively in roots, leaves, stems, and flowers.

It localises to the nucleus. Functionally, positive brassinosteroid-signaling protein. In Arabidopsis thaliana (Mouse-ear cress), this protein is Transcription factor BIM2 (BIM2).